We begin with the raw amino-acid sequence, 88 residues long: UPF0223 protein YktA (88 aa).

This sequence belongs to the UPF0223 family.

This is UPF0223 protein YktA (yktA) from Bacillus subtilis (strain 168).